The chain runs to 732 residues: 1,4-alpha-glucan branching enzyme GlgB (732 aa).

Asp-415 serves as the catalytic Nucleophile. The active-site Proton donor is Glu-468.

It belongs to the glycosyl hydrolase 13 family. GlgB subfamily. As to quaternary structure, monomer.

The enzyme catalyses Transfers a segment of a (1-&gt;4)-alpha-D-glucan chain to a primary hydroxy group in a similar glucan chain.. It participates in glycan biosynthesis; glycogen biosynthesis. Its function is as follows. Catalyzes the formation of the alpha-1,6-glucosidic linkages in glycogen by scission of a 1,4-alpha-linked oligosaccharide from growing alpha-1,4-glucan chains and the subsequent attachment of the oligosaccharide to the alpha-1,6 position. This Nitrosomonas eutropha (strain DSM 101675 / C91 / Nm57) protein is 1,4-alpha-glucan branching enzyme GlgB.